The following is a 62-amino-acid chain: Large ribosomal subunit protein bL33c (62 aa).

It belongs to the bacterial ribosomal protein bL33 family.

Its subcellular location is the plastid. The protein resides in the chloroplast. The polypeptide is Large ribosomal subunit protein bL33c (Cyanidioschyzon merolae (strain NIES-3377 / 10D) (Unicellular red alga)).